The sequence spans 172 residues: uncharacterized protein (172 aa).

The region spanning 10 to 122 (KESKVVKTSR…FLTFVALDSN (113 aa)) is the HotDog ACOT-type domain. The tract at residues 148 to 172 (RANERKNRKRHSQALANALGTDKPW) is disordered.

This sequence belongs to the acyl coenzyme A hydrolase family.

This is an uncharacterized protein from Bacillus subtilis (strain 168).